A 273-amino-acid polypeptide reads, in one-letter code: GTP cyclohydrolase MptA (273 aa).

This sequence belongs to the GTP cyclohydrolase IV family. Homodimer. Fe(2+) serves as cofactor.

The catalysed reaction is GTP + H2O = 7,8-dihydroneopterin 2',3'-cyclic phosphate + formate + diphosphate + H(+). The protein operates within cofactor biosynthesis; 5,6,7,8-tetrahydromethanopterin biosynthesis. Functionally, converts GTP to 7,8-dihydro-D-neopterin 2',3'-cyclic phosphate, the first intermediate in the biosynthesis of coenzyme methanopterin. This is GTP cyclohydrolase MptA from Picrophilus torridus (strain ATCC 700027 / DSM 9790 / JCM 10055 / NBRC 100828 / KAW 2/3).